Consider the following 399-residue polypeptide: UDP-N-acetylglucosamine--N-acetylmuramyl-(pentapeptide) pyrophosphoryl-undecaprenol N-acetylglucosamine transferase (399 aa).

UDP-N-acetyl-alpha-D-glucosamine-binding positions include 29–31, N148, R185, S219, and Q318; that span reads TAG.

It belongs to the glycosyltransferase 28 family. MurG subfamily.

It is found in the cell membrane. The catalysed reaction is di-trans,octa-cis-undecaprenyl diphospho-N-acetyl-alpha-D-muramoyl-L-alanyl-D-glutamyl-meso-2,6-diaminopimeloyl-D-alanyl-D-alanine + UDP-N-acetyl-alpha-D-glucosamine = di-trans,octa-cis-undecaprenyl diphospho-[N-acetyl-alpha-D-glucosaminyl-(1-&gt;4)]-N-acetyl-alpha-D-muramoyl-L-alanyl-D-glutamyl-meso-2,6-diaminopimeloyl-D-alanyl-D-alanine + UDP + H(+). It participates in cell wall biogenesis; peptidoglycan biosynthesis. Its function is as follows. Cell wall formation. Catalyzes the transfer of a GlcNAc subunit on undecaprenyl-pyrophosphoryl-MurNAc-pentapeptide (lipid intermediate I) to form undecaprenyl-pyrophosphoryl-MurNAc-(pentapeptide)GlcNAc (lipid intermediate II). This Mycobacterium ulcerans (strain Agy99) protein is UDP-N-acetylglucosamine--N-acetylmuramyl-(pentapeptide) pyrophosphoryl-undecaprenol N-acetylglucosamine transferase.